The sequence spans 238 residues: tRNA (guanine-N(7)-)-methyltransferase (238 aa).

Positions 68, 93, 120, and 143 each coordinate S-adenosyl-L-methionine. Asp143 is an active-site residue. Substrate contacts are provided by residues Lys147, Asp179, and 216 to 219 (TKFE).

The protein belongs to the class I-like SAM-binding methyltransferase superfamily. TrmB family.

It catalyses the reaction guanosine(46) in tRNA + S-adenosyl-L-methionine = N(7)-methylguanosine(46) in tRNA + S-adenosyl-L-homocysteine. It functions in the pathway tRNA modification; N(7)-methylguanine-tRNA biosynthesis. Functionally, catalyzes the formation of N(7)-methylguanine at position 46 (m7G46) in tRNA. In Aliivibrio salmonicida (strain LFI1238) (Vibrio salmonicida (strain LFI1238)), this protein is tRNA (guanine-N(7)-)-methyltransferase.